A 910-amino-acid chain; its full sequence is MLRTTRRTLMQGASLVGAGLFAAGRGWALNRLEPIGDTLAEEYPYRDWEDLYRNEFTWDYVGKAAHCINCLGNCAFDIYVKDGIVIREEQLAKYPQISPDIPDANPRGCQKGAIHSTSMYEADRLRYPMKRVGARGEGKWQRISWDQATEEIADKIIDIYEKYGPGKLMTHTGSGNMSMMRMAAPYRFASLVGGVQLDIFTDVGDLNTGAHLAYGNALESFTSDAWFGADYIMFLLFNPVATRIPDAHFLWEAKWNGARVVSVAPDYNPSSIHSDLWMPIKQGADPFLAMSMVNVIIEGKLYNEAFMKEQTDLPILVRSDNGMLLREADLEEGGSDQVFYHWDSRTGAAVKVKGSMGSEEKTLVLGDVDPALEGSFEVGGIPVTTVFEKVRAEAAKYPPEETAAITGIGPGVVRAEAETFARAKKALLMTGFNIGRYSNGIYTSWALTLMLALTGHGGRTGGLDTSWIAWNQPALLELAFFDFKKLPRLEAGGLGEFVRGGMMEHSRQHYDNDKLKARTGFDLDELQEMIDESIDAGWMPYYGDMKGLISIADNKFRRNKNAEAYRERILEEVEELFVDINVRMDSTAQWADYLLPAAAHYEAWDLRSIAFHRFVNVFSRPVPPIGEAKSDWEIMEILTRKIQERAIARGITGYEDGDVTRDFATIHDDYTMDGTLMTDHDVVSWLVENGPEFAGATLEEGVERGFFVMGEDAGPTQKLRPSEPYHAFLQQTEGKEPYKTMTGRITFFVDHPRFVRLGATVPTARHHAGRDASNYPLNFFSPHTRWGIHSNWRSNKFMLRLQRGEPNIYISPQLAAAKGIADGAQVRVFNELSFFFAQAKFYPSLPPDTIMMEHGWEPHQFPNWRPMNVCMATLLQPLELVGGWGHLNFSLWHWNANQLAHESSVDIEPA.

Residues 1–28 (MLRTTRRTLMQGASLVGAGLFAAGRGWA) constitute a signal peptide (tat-type signal). The 65-residue stretch at 59-123 (DYVGKAAHCI…IHSTSMYEAD (65 aa)) folds into the 4Fe-4S Mo/W bis-MGD-type domain. [4Fe-4S] cluster-binding residues include His66, Cys70, Cys74, and Cys109.

Belongs to the prokaryotic molybdopterin-containing oxidoreductase family. Heterotrimer of alpha, beta and gamma subunits. [4Fe-4S] cluster is required as a cofactor. Requires Mo-bis(molybdopterin guanine dinucleotide) as cofactor. In terms of processing, predicted to be exported by the Tat system. The position of the signal peptide cleavage has been experimentally proven.

It is found in the periplasm. The catalysed reaction is 2 Fe(III)-[cytochrome c2] + dimethyl sulfide + H2O = 2 Fe(II)-[cytochrome c2] + dimethyl sulfoxide + 2 H(+). Its function is as follows. Allows photoautotrophic growth on dimethyl sulfide (DMS) as the sole electron donor. In Rhodovulum sulfidophilum (Rhodobacter sulfidophilus), this protein is Dimethylsulfide dehydrogenase subunit alpha (ddhA).